A 293-amino-acid chain; its full sequence is Eukaryotic translation initiation factor 3 subunit F (293 aa).

Ala2 carries the post-translational modification N-acetylalanine. The 132-residue stretch at 28-159 (ARIHPLVIFN…IKAFVSSNLS (132 aa)) folds into the MPN domain.

The protein belongs to the eIF-3 subunit F family. Component of the eukaryotic translation initiation factor 3 (eIF-3) complex. Binds to TIF3E1 and TIF3H1. Expressed in inflorescences, leaves, stems, siliques, roots and seedlings. Accumulates at highly levels in pollen grains, developing embryos and root tips.

The protein localises to the cytoplasm. Functionally, component of the eukaryotic translation initiation factor 3 (eIF-3) complex, which is involved in protein synthesis of a specialized repertoire of mRNAs and, together with other initiation factors, stimulates binding of mRNA and methionyl-tRNAi to the 40S ribosome. The eIF-3 complex specifically targets and initiates translation of a subset of mRNAs involved in cell proliferation (Potential). Involved in cell growth and differentiation, especially during embryogenesis and male gametophyte germination. Regulates sensitivity to sugars (e.g. sucrose). The sequence is that of Eukaryotic translation initiation factor 3 subunit F (TIF3F1) from Arabidopsis thaliana (Mouse-ear cress).